The primary structure comprises 211 residues: SAGA-associated factor 11 homolog (211 aa).

An SGF11-type zinc finger spans residues 115-136 (CTCPHCDRLVAAARFAPHLEKC). The tract at residues 153 to 211 (TKEGASASSSSTSTYIQSGGNTGGTDDEDDVDWSSDKRKKKSTQNSRNNGSKKNNGKIF) is disordered. Low complexity predominate over residues 157–166 (ASASSSSTST). The residue at position 187 (S187) is a Phosphoserine. Residues 197 to 211 (NSRNNGSKKNNGKIF) are compositionally biased toward low complexity.

It belongs to the SGF11 family. Component of some SAGA transcription coactivator-HAT complexes, at least composed of Ada2b, not/nonstop, Pcaf/Gcn5, Sgf11 and Spt3. Within the SAGA complex, Sgf11, e(y)2, and not/nonstop form an additional subcomplex of SAGA called the DUB module (deubiquitination module). Interacts directly with not/nonstop. Interacts with the AMEX complex component xmas-2. Interacts with Cbp80; important for promoter recruitment of Sgf11 that is not associated with the DUB module.

It is found in the nucleus. It localises to the nucleoplasm. The protein localises to the cytoplasm. Functionally, component of the transcription regulatory histone acetylation (HAT) complex SAGA, a multiprotein complex that activates transcription by remodeling chromatin and mediating histone acetylation and deubiquitination. Within the SAGA complex, participates in a subcomplex that specifically deubiquitinates histone H2B. The SAGA complex is recruited to specific gene promoters by activators, where it is required for transcription. Required for nuclear receptor-mediated transactivation. Binds independently on SAGA to promoters in an RNA-dependent manner. Binds to mRNA and is essential for total mRNA export from the nucleus. Required to counteract heterochromatin silencing. Controls the development of neuronal connectivity in visual system by being required for accurate axon targeting in the optic lobe. Required for expression of ecdysone-induced genes such as br/broad. The polypeptide is SAGA-associated factor 11 homolog (Drosophila mojavensis (Fruit fly)).